The primary structure comprises 68 residues: Large ribosomal subunit protein bL35 (68 aa).

Residues 29–68 (GGVSHYNTKKSSKRKRQGRKPQYVPKNLEHKVKALLPNDV) form a disordered region. A compositionally biased stretch (basic residues) spans 35-47 (NTKKSSKRKRQGR).

Belongs to the bacterial ribosomal protein bL35 family.

The polypeptide is Large ribosomal subunit protein bL35 (Sulfurihydrogenibium sp. (strain YO3AOP1)).